A 199-amino-acid chain; its full sequence is Peptidyl-tRNA hydrolase (199 aa).

Tyrosine 18 is a binding site for tRNA. Histidine 23 (proton acceptor) is an active-site residue. TRNA-binding residues include tyrosine 69, asparagine 71, and asparagine 117.

It belongs to the PTH family. As to quaternary structure, monomer.

The protein localises to the cytoplasm. The enzyme catalyses an N-acyl-L-alpha-aminoacyl-tRNA + H2O = an N-acyl-L-amino acid + a tRNA + H(+). Functionally, hydrolyzes ribosome-free peptidyl-tRNAs (with 1 or more amino acids incorporated), which drop off the ribosome during protein synthesis, or as a result of ribosome stalling. Catalyzes the release of premature peptidyl moieties from peptidyl-tRNA molecules trapped in stalled 50S ribosomal subunits, and thus maintains levels of free tRNAs and 50S ribosomes. The chain is Peptidyl-tRNA hydrolase from Prochlorococcus marinus (strain MIT 9515).